Consider the following 33-residue polypeptide: Brevinin-2DYc (33 aa).

Residues Cys27 and Cys33 are joined by a disulfide bond.

In terms of tissue distribution, expressed by the skin glands.

Its subcellular location is the secreted. Its function is as follows. Antimicrobial peptide. A mixture of Brevinin-2DYc/2DYd is active against the Gram-positive bacterium S.aureus (MIC=15 uM) and the Gram-negative bacterium E.coli (MIC=15 uM). This is Brevinin-2DYc from Rana dybowskii (Dybovsky's frog).